A 209-amino-acid polypeptide reads, in one-letter code: Uracil phosphoribosyltransferase (209 aa).

5-phospho-alpha-D-ribose 1-diphosphate contacts are provided by residues Arg79, Arg104, and 131–139 (DPMLATGHS). Uracil contacts are provided by residues Ile194 and 199–201 (GDA). Asp200 is a binding site for 5-phospho-alpha-D-ribose 1-diphosphate.

Belongs to the UPRTase family. Mg(2+) is required as a cofactor.

The enzyme catalyses UMP + diphosphate = 5-phospho-alpha-D-ribose 1-diphosphate + uracil. It participates in pyrimidine metabolism; UMP biosynthesis via salvage pathway; UMP from uracil: step 1/1. Its activity is regulated as follows. Allosterically activated by GTP. Its function is as follows. Catalyzes the conversion of uracil and 5-phospho-alpha-D-ribose 1-diphosphate (PRPP) to UMP and diphosphate. The chain is Uracil phosphoribosyltransferase from Caulobacter vibrioides (strain ATCC 19089 / CIP 103742 / CB 15) (Caulobacter crescentus).